Reading from the N-terminus, the 73-residue chain is Gastricsin (73 aa).

A propeptide spans 1 to 43 (SVIKVPLKKLKSIRQAMKEKGLLEEFLKTHKYDPAQRYRIGDI) (activation peptide). Positions 57 to 73 (YFGEISIGTPPQNFLVL) constitute a Peptidase A1 domain.

Belongs to the peptidase A1 family.

Its subcellular location is the secreted. It carries out the reaction More restricted specificity than pepsin A, but shows preferential cleavage at Tyr-|-Xaa bonds. High activity on hemoglobin.. In terms of biological role, hydrolyzes a variety of proteins. The chain is Gastricsin (PGC) from Sus scrofa (Pig).